The chain runs to 757 residues: MLERAALLHRLRLPAHSLPFIYNGALFGGAKRSFSATSKRCTYEEEKAVLDELKPQLTADDLKHSKLLRNIGVSAHIDSGKTTFTERVLYYTGRIKAIHEVRGRDSVGAKMDHMDLEREKGITIQSAATYCSWDKDQESYHFNLIDTPGHIDFTIEVERALRVLDGAVLVVCAVSGVQSQTVTVDRQMRRYNVPRVTFINKMDRMGADPFKAIQQINTKLRIPAAAVHVPIGSESDLCGVVDIINRVAIYNEGENGEVLRKGPVPEELQDLVEEKRLLLVETLADVDDEMAEIFLDEQEPTVQQIKDAIRRATIARKFTPVLMGSALANTGIQNVLDAIVDYLPEPSEVLNTALDVSNNETKVNLIPSSHHPFVGLAFKLEEGNYGQLTYIRVYQGKLKKGGYITNVRTGKKVKVSRLVRMHSNEMEDVNEIGAGEICATFGIDCSSGDTFTDGKLKYSMSSMYVPDAVISLSISPNSKDSATNFSKALNRFQKEDPTFRVRFDPESKQTIISGMGELHLEIYVERMRREYNVACTTGKPQVSYRESIQIPATFDYTHKKQSGGAGQYARVMGNLTPVANSSENTFTTAVVGGRIPDKYLAACAKGFEEVCEKGPLIGHKVLGINMLINDGAIHAVDSNELAFKTATTAAFVQSFMQAQPVVLEPIMTVTVTAPNEFQGNVITLLNKLQAVIQDTENGHDEFTMTSECSLNTMFGFATSLRASTQGKGEFSLEFKQYSPASPQLQKQLIEEYRKSKK.

A mitochondrion-targeting transit peptide spans 1 to 41 (MLERAALLHRLRLPAHSLPFIYNGALFGGAKRSFSATSKRC). Residues 66-347 (KLLRNIGVSA…AIVDYLPEPS (282 aa)) enclose the tr-type G domain. Residues 75-82 (AHIDSGKT), 146-150 (DTPGH), and 200-203 (NKMD) each bind GTP.

It belongs to the TRAFAC class translation factor GTPase superfamily. Classic translation factor GTPase family. EF-G/EF-2 subfamily.

It localises to the mitochondrion. The protein operates within protein biosynthesis; polypeptide chain elongation. In terms of biological role, mitochondrial GTPase that catalyzes the GTP-dependent ribosomal translocation step during translation elongation. During this step, the ribosome changes from the pre-translocational (PRE) to the post-translocational (POST) state as the newly formed A-site-bound peptidyl-tRNA and P-site-bound deacylated tRNA move to the P and E sites, respectively. Catalyzes the coordinated movement of the two tRNA molecules, the mRNA and conformational changes in the ribosome. The polypeptide is Elongation factor G, mitochondrial (Eremothecium gossypii (strain ATCC 10895 / CBS 109.51 / FGSC 9923 / NRRL Y-1056) (Yeast)).